Consider the following 246-residue polypeptide: NAD-dependent protein deacylase (246 aa).

Positions 1-237 constitute a Deacetylase sirtuin-type domain; that stretch reads MSLPYRHVVI…PRLVEEILAA (237 aa). 13–32 provides a ligand contact to NAD(+); it reads GAGISAESGIQTFRAQDGLW. The substrate site is built by Tyr-57 and Arg-60. 94-97 serves as a coordination point for NAD(+); that stretch reads QNID. His-112 functions as the Proton acceptor in the catalytic mechanism. Cys-120 and Cys-139 together coordinate Zn(2+). NAD(+) is bound by residues 179–181, 205–207, and Ala-223; these read GTS and NLE.

Belongs to the sirtuin family. Class III subfamily. The cofactor is Zn(2+).

The protein localises to the cytoplasm. It catalyses the reaction N(6)-acetyl-L-lysyl-[protein] + NAD(+) + H2O = 2''-O-acetyl-ADP-D-ribose + nicotinamide + L-lysyl-[protein]. The catalysed reaction is N(6)-succinyl-L-lysyl-[protein] + NAD(+) + H2O = 2''-O-succinyl-ADP-D-ribose + nicotinamide + L-lysyl-[protein]. NAD-dependent lysine deacetylase and desuccinylase that specifically removes acetyl and succinyl groups on target proteins. Modulates the activities of several proteins which are inactive in their acylated form. This chain is NAD-dependent protein deacylase, found in Vibrio cholerae serotype O1 (strain ATCC 39315 / El Tor Inaba N16961).